The sequence spans 224 residues: Large ribosomal subunit protein bL25 (224 aa).

A disordered region spans residues 196 to 224 (VEEVDTDAEEVDAADVPATEQGSEEDKGE). Over residues 197–208 (EEVDTDAEEVDA) the composition is skewed to acidic residues.

Belongs to the bacterial ribosomal protein bL25 family. CTC subfamily. As to quaternary structure, part of the 50S ribosomal subunit; part of the 5S rRNA/L5/L18/L25 subcomplex. Contacts the 5S rRNA. Binds to the 5S rRNA independently of L5 and L18.

Its function is as follows. This is one of the proteins that binds to the 5S RNA in the ribosome where it forms part of the central protuberance. The sequence is that of Large ribosomal subunit protein bL25 from Psychrobacter sp. (strain PRwf-1).